The chain runs to 285 residues: MSSAIYLENYLDGLESLPTELERNFKLMRKLDDRAQTAMKSIDSHAKDFMRKLGENGAMSEDERRERQEDIKALFGKAKEYSDDKVQLAIQTYELVDKQIRRLDNDLARFEGEIQEKASSTRAKSEEVVAKKGRKKTKDSKTTGKKKKSASSDEETGRGNNQSNANSSVNSSSNAGQGSKKKKSKVNQEKETRKGGAQKKTVEVDDSEKESCHTAATHPSDVMDMPVDPNEPTYCLCHQVSYGEMIGCDNPDCPIEWFHFACVGLTTKPKGKWFCPKCTQDRKKK.

Residues 116-225 (EKASSTRAKS…ATHPSDVMDM (110 aa)) form a disordered region. Positions 131 to 149 (KKGRKKTKDSKTTGKKKKS) are enriched in basic residues. The span at 160-178 (NNQSNANSSVNSSSNAGQG) shows a compositional bias: low complexity. The segment at 232–281 (PTYCLCHQVSYGEMIGCDNPDCPIEWFHFACVGLTTKPKGKWFCPKCTQD) adopts a PHD-type zinc-finger fold. The Zn(2+) site is built by Cys235, Cys237, Cys248, Cys253, His259, Cys262, Cys275, and Cys278.

The protein belongs to the ING family. Component of the Enok complex composed of at least Br140, enok, Eaf6 and Ing5.

The protein resides in the nucleus. The protein localises to the chromosome. Its function is as follows. Component of the Enok complex which has a histone H3 acetyltransferase activity. The protein is Inhibitor of growth protein 5 of Drosophila melanogaster (Fruit fly).